A 211-amino-acid polypeptide reads, in one-letter code: Large ribosomal subunit protein bL25 (211 aa).

The tract at residues Gly186–Gly211 is disordered.

Belongs to the bacterial ribosomal protein bL25 family. CTC subfamily. As to quaternary structure, part of the 50S ribosomal subunit; part of the 5S rRNA/L5/L18/L25 subcomplex. Contacts the 5S rRNA. Binds to the 5S rRNA independently of L5 and L18.

In terms of biological role, this is one of the proteins that binds to the 5S RNA in the ribosome where it forms part of the central protuberance. This is Large ribosomal subunit protein bL25 from Gloeobacter violaceus (strain ATCC 29082 / PCC 7421).